The sequence spans 230 residues: 2-C-methyl-D-erythritol 4-phosphate cytidylyltransferase (230 aa).

Belongs to the IspD/TarI cytidylyltransferase family. IspD subfamily.

It catalyses the reaction 2-C-methyl-D-erythritol 4-phosphate + CTP + H(+) = 4-CDP-2-C-methyl-D-erythritol + diphosphate. Its pathway is isoprenoid biosynthesis; isopentenyl diphosphate biosynthesis via DXP pathway; isopentenyl diphosphate from 1-deoxy-D-xylulose 5-phosphate: step 2/6. Catalyzes the formation of 4-diphosphocytidyl-2-C-methyl-D-erythritol from CTP and 2-C-methyl-D-erythritol 4-phosphate (MEP). In Nocardia farcinica (strain IFM 10152), this protein is 2-C-methyl-D-erythritol 4-phosphate cytidylyltransferase.